Consider the following 342-residue polypeptide: C-X-C chemokine receptor type 6 (342 aa).

The Extracellular portion of the chain corresponds to Met-1–Val-32. A glycan (N-linked (GlcNAc...) asparagine) is linked at Asn-16. A helical transmembrane segment spans residues Phe-33 to Tyr-59. The Cytoplasmic portion of the chain corresponds to His-60–Val-68. A helical membrane pass occupies residues Phe-69 to Tyr-89. Residues Ala-90 to Lys-103 lie on the Extracellular side of the membrane. Cys-102 and Cys-180 are disulfide-bonded. The chain crosses the membrane as a helical span at residues Ser-104 to Val-125. Residues Asp-126–Lys-143 are Cytoplasmic-facing. A helical membrane pass occupies residues Arg-144–Leu-164. Topologically, residues Pro-165 to Ile-187 are extracellular. Residues Ser-188–Ile-215 traverse the membrane as a helical segment. Over Lys-216 to Lys-231 the chain is Cytoplasmic. A helical transmembrane segment spans residues Ile-232 to Glu-259. Residues Tyr-260–Ala-275 lie on the Extracellular side of the membrane. Residues Ile-276–Leu-293 traverse the membrane as a helical segment. The Cytoplasmic portion of the chain corresponds to Lys-294–Leu-342.

The protein belongs to the G-protein coupled receptor 1 family. In terms of tissue distribution, expressed in lymphoid tissues and activated T cells.

It localises to the cell membrane. Its function is as follows. Receptor for the C-X-C chemokine CXCL16. Used as a coreceptor by SIVs and by strains of HIV-2 and m-tropic HIV-1. The protein is C-X-C chemokine receptor type 6 (CXCR6) of Homo sapiens (Human).